The sequence spans 573 residues: Sulfite oxidase, mitochondrial (573 aa).

The N-terminal 34 residues, 1 to 34, are a transit peptide targeting the mitochondrion; it reads MRLLRPSWAGLLRGRHHQHQRHHRRLLLTTSRGS. Residues 14–26 show a composition bias toward basic residues; it reads GRHHQHQRHHRRL. Positions 14 to 50 are disordered; sequence GRHHQHQRHHRRLLLTTSRGSNGEREEQQHSQWSSPG. Residues 108 to 186 form the Cytochrome b5 heme-binding domain; the sequence is LPTYRAEEVE…LEGFRIGNLE (79 aa). 2 residues coordinate heme b: histidine 144 and histidine 168. The tract at residues 190–199 is hinge; sequence VTNVDDELGS. The tract at residues 200–423 is moco domain; that stretch reads PWSQEPQRHA…DSHWQQNDYK (224 aa). Mo-molybdopterin is bound by residues 240-244, cysteine 287, aspartate 344, histidine 383, arginine 388, and 399-401; these read YVRNH and NVK. The interval 424–567 is homodimerization; that stretch reads GFSPSTDWDT…RGVLANAYHK (144 aa).

It depends on heme b as a cofactor. Mo-molybdopterin serves as cofactor. Expressed in the ensheathing glia with relatively weak expression in the CNS cortex (at protein level).

It localises to the mitochondrion intermembrane space. It carries out the reaction sulfite + O2 + H2O = sulfate + H2O2. It functions in the pathway energy metabolism; sulfur metabolism. Its function is as follows. Required in ensheathing glial cells for normal larval locomotion. Oxidizes sulfite which is required to maintain glutamate homeostasis and as a consequence, neuronal network function. This chain is Sulfite oxidase, mitochondrial, found in Drosophila melanogaster (Fruit fly).